Here is a 734-residue protein sequence, read N- to C-terminus: Photosystem I P700 chlorophyll a apoprotein A2 (734 aa).

The next 8 membrane-spanning stretches (helical) occupy residues 46-69 (IFAS…FHVA), 135-158 (LYAG…LHLQ), 175-199 (LNHH…HVAI), 273-291 (IAHH…GHMY), 330-353 (LHFQ…QHMY), 369-395 (SALY…IFFV), 417-439 (AIIS…IYVH), and 517-535 (FLIH…LILV). 2 residues coordinate [4Fe-4S] cluster: Cys-559 and Cys-568. A run of 2 helical transmembrane segments spans residues 575–596 (AFYL…YWHW) and 643–665 (LSVW…MFLI). Chlorophyll a contacts are provided by His-654, Met-662, and Tyr-670. Trp-671 contacts phylloquinone. The chain crosses the membrane as a helical span at residues 707–727 (LVGLIHFTAGYIFTYAAFVIA).

The protein belongs to the PsaA/PsaB family. In terms of assembly, the PsaA/B heterodimer binds the P700 chlorophyll special pair and subsequent electron acceptors. PSI consists of a core antenna complex that captures photons, and an electron transfer chain that converts photonic excitation into a charge separation. The eukaryotic PSI reaction center is composed of at least 11 subunits. It depends on P700 is a chlorophyll a/chlorophyll a' dimer, A0 is one or more chlorophyll a, A1 is one or both phylloquinones and FX is a shared 4Fe-4S iron-sulfur center. as a cofactor.

It is found in the plastid. It localises to the chloroplast thylakoid membrane. The catalysed reaction is reduced [plastocyanin] + hnu + oxidized [2Fe-2S]-[ferredoxin] = oxidized [plastocyanin] + reduced [2Fe-2S]-[ferredoxin]. Its function is as follows. PsaA and PsaB bind P700, the primary electron donor of photosystem I (PSI), as well as the electron acceptors A0, A1 and FX. PSI is a plastocyanin/cytochrome c6-ferredoxin oxidoreductase, converting photonic excitation into a charge separation, which transfers an electron from the donor P700 chlorophyll pair to the spectroscopically characterized acceptors A0, A1, FX, FA and FB in turn. Oxidized P700 is reduced on the lumenal side of the thylakoid membrane by plastocyanin or cytochrome c6. The polypeptide is Photosystem I P700 chlorophyll a apoprotein A2 (Rhodomonas salina (Cryptomonas salina)).